The sequence spans 74 residues: UPF0741 protein BcerKBAB4_5177 (74 aa).

This sequence belongs to the UPF0741 family.

The protein is UPF0741 protein BcerKBAB4_5177 of Bacillus mycoides (strain KBAB4) (Bacillus weihenstephanensis).